A 324-amino-acid polypeptide reads, in one-letter code: Phospho-N-acetylmuramoyl-pentapeptide-transferase (324 aa).

10 helical membrane-spanning segments follow: residues 5 to 25 (IIVIAMAVSFLITVILSPLFI), 52 to 72 (PTMGGIMILLSIIATTVWVTA), 76 to 96 (VLSAGTYLLLFVTIGYGVLGF), 117 to 137 (FIGQLIIAVIFFFVYRQSGFS), 147 to 167 (WSFDLGWAYGVLLLFMLVGGS), 176 to 196 (LDGLLAGTAAIAFGAYAVLAW), 203 to 223 (VAVFCVAVVGAVLGFLVFNAH), 227 to 247 (VFMGDTGSLALGGAIAAVAVL), 250 to 270 (LELLLVVIGGVFVIETLSVII), and 302 to 322 (IVVTFWAVGLLFAMLGIYIEV).

Belongs to the glycosyltransferase 4 family. MraY subfamily. The cofactor is Mg(2+).

The protein resides in the cell membrane. It carries out the reaction UDP-N-acetyl-alpha-D-muramoyl-L-alanyl-gamma-D-glutamyl-meso-2,6-diaminopimeloyl-D-alanyl-D-alanine + di-trans,octa-cis-undecaprenyl phosphate = di-trans,octa-cis-undecaprenyl diphospho-N-acetyl-alpha-D-muramoyl-L-alanyl-D-glutamyl-meso-2,6-diaminopimeloyl-D-alanyl-D-alanine + UMP. Its pathway is cell wall biogenesis; peptidoglycan biosynthesis. Functionally, catalyzes the initial step of the lipid cycle reactions in the biosynthesis of the cell wall peptidoglycan: transfers peptidoglycan precursor phospho-MurNAc-pentapeptide from UDP-MurNAc-pentapeptide onto the lipid carrier undecaprenyl phosphate, yielding undecaprenyl-pyrophosphoryl-MurNAc-pentapeptide, known as lipid I. The chain is Phospho-N-acetylmuramoyl-pentapeptide-transferase from Geobacillus thermodenitrificans (strain NG80-2).